Consider the following 66-residue polypeptide: ATP synthase protein 8 (66 aa).

A helical membrane pass occupies residues 8 to 24 (TWLMMIMSMFLALFIIF). Residue K54 is modified to N6-acetyllysine; alternate. The residue at position 54 (K54) is an N6-succinyllysine; alternate. N6-acetyllysine is present on K57.

Belongs to the ATPase protein 8 family. In terms of assembly, F-type ATPases have 2 components, CF(1) - the catalytic core - and CF(0) - the membrane proton channel. Component of an ATP synthase complex composed of ATP5PB, ATP5MC1, ATP5F1E, ATP5PD, ATP5ME, ATP5PF, ATP5MF, MT-ATP6, MT-ATP8, ATP5F1A, ATP5F1B, ATP5F1D, ATP5F1C, ATP5PO, ATP5MG, ATP5MK and ATP5MJ. Interacts with PRICKLE3.

It is found in the mitochondrion membrane. Functionally, mitochondrial membrane ATP synthase (F(1)F(0) ATP synthase or Complex V) produces ATP from ADP in the presence of a proton gradient across the membrane which is generated by electron transport complexes of the respiratory chain. F-type ATPases consist of two structural domains, F(1) - containing the extramembraneous catalytic core and F(0) - containing the membrane proton channel, linked together by a central stalk and a peripheral stalk. During catalysis, ATP synthesis in the catalytic domain of F(1) is coupled via a rotary mechanism of the central stalk subunits to proton translocation. Part of the complex F(0) domain. Minor subunit located with subunit a in the membrane. The sequence is that of ATP synthase protein 8 (MT-ATP8) from Cervus elaphus hippelaphus (European red deer).